The following is a 209-amino-acid chain: Kynurenine formamidase (209 aa).

Trp19 contributes to the substrate binding site. His49, His53, and Asp55 together coordinate Zn(2+). His59 functions as the Proton donor/acceptor in the catalytic mechanism. Zn(2+) is bound by residues His160 and Glu172.

It belongs to the Cyclase 1 superfamily. KynB family. As to quaternary structure, homodimer. Zn(2+) is required as a cofactor.

The catalysed reaction is N-formyl-L-kynurenine + H2O = L-kynurenine + formate + H(+). The protein operates within amino-acid degradation; L-tryptophan degradation via kynurenine pathway; L-kynurenine from L-tryptophan: step 2/2. Functionally, catalyzes the hydrolysis of N-formyl-L-kynurenine to L-kynurenine, the second step in the kynurenine pathway of tryptophan degradation. This chain is Kynurenine formamidase, found in Geobacillus thermodenitrificans (strain NG80-2).